A 191-amino-acid polypeptide reads, in one-letter code: Bcl-2-like protein 10 (191 aa).

The short motif at 79–98 (LSKDQDFSWSQLVMLLAFAG) is the BH1 element. Lys112 is covalently cross-linked (Glycyl lysine isopeptide (Lys-Gly) (interchain with G-Cter in ubiquitin)). The BH2 signature appears at 144–155 (RLEALGGWDGFC). A helical membrane pass occupies residues 166 to 183 (FWRRLLIQAFLSGFFATA).

The protein belongs to the Bcl-2 family. Interacts with BAX. Interacts with BCL2 and BCL2L1/BCLX. Interacts with APAF1. Interacts with ITPR1, ITPR2 and ITPR3; the interaction with ITPR1 is increased in the presence of AHCLY1. Interacts with AHCYL1. Interacts with HIP1R (via ENTH and I/LWEQ domains). Interacts with CASP9. Interacts with BCL2L11/BIM. Interacts with BIK. Interacts with UBQLN4. Interacts with NME2/NM23-H2. Interacts with PMAIP1/NOXA. Interacts with TPX2. Interacts with UBQLN1; in the cytoplasm. Interacts (via BH1 domain) with BECN1. Requires Ca(2+) as cofactor. Post-translationally, monoubiquitinated by UBQLN1; results in stabilization of BCL2L10 protein abundance and in relocalization from mitochondria to cytoplasm. As to expression, expressed in multiple embryonic tissues. Restricted to the ovary and testis in adult mice.

The protein resides in the mitochondrion. The protein localises to the nucleus membrane. Its subcellular location is the endoplasmic reticulum. It is found in the cytoplasm. It localises to the cytoskeleton. The protein resides in the spindle. Functionally, promotes cell survival by suppressing apoptosis induced by BAX but not BAK. Increases binding of AHCYL1/IRBIT to ITPR1. Reduces ITPR1-mediated calcium release from the endoplasmic reticulum cooperatively with AHCYL1/IRBIT under normal cellular conditions. Under apoptotic stress conditions, dissociates from ITPR1 and is displaced from mitochondria-associated endoplasmic reticulum membranes, leading to increased Ca(2+) transfer to mitochondria which promotes apoptosis. Required for the correct formation of the microtubule organizing center during oocyte cell division, potentially via regulation of protein abundance and localization of other microtubule organizing center components such as AURKA and TPX2. In Mus musculus (Mouse), this protein is Bcl-2-like protein 10.